The primary structure comprises 345 residues: Tetraacyldisaccharide 4'-kinase (345 aa).

T61–T68 provides a ligand contact to ATP.

The protein belongs to the LpxK family.

It carries out the reaction a lipid A disaccharide + ATP = a lipid IVA + ADP + H(+). It functions in the pathway glycolipid biosynthesis; lipid IV(A) biosynthesis; lipid IV(A) from (3R)-3-hydroxytetradecanoyl-[acyl-carrier-protein] and UDP-N-acetyl-alpha-D-glucosamine: step 6/6. Its function is as follows. Transfers the gamma-phosphate of ATP to the 4'-position of a tetraacyldisaccharide 1-phosphate intermediate (termed DS-1-P) to form tetraacyldisaccharide 1,4'-bis-phosphate (lipid IVA). In Xanthomonas axonopodis pv. citri (strain 306), this protein is Tetraacyldisaccharide 4'-kinase.